Consider the following 337-residue polypeptide: Ribosomal RNA small subunit methyltransferase C (337 aa).

It belongs to the methyltransferase superfamily. RsmC family. In terms of assembly, monomer.

The protein localises to the cytoplasm. The catalysed reaction is guanosine(1207) in 16S rRNA + S-adenosyl-L-methionine = N(2)-methylguanosine(1207) in 16S rRNA + S-adenosyl-L-homocysteine + H(+). Its function is as follows. Specifically methylates the guanine in position 1207 of 16S rRNA in the 30S particle. This chain is Ribosomal RNA small subunit methyltransferase C, found in Acinetobacter baumannii (strain AB307-0294).